A 337-amino-acid polypeptide reads, in one-letter code: Glyceraldehyde-3-phosphate dehydrogenase (337 aa).

NAD(+) contacts are provided by residues 12–13 (RI), aspartate 34, and lysine 79. D-glyceraldehyde 3-phosphate is bound by residues 150–152 (SCT), threonine 181, 210–211 (TG), and arginine 233. The Nucleophile role is filled by cysteine 151. NAD(+) is bound at residue asparagine 315.

This sequence belongs to the glyceraldehyde-3-phosphate dehydrogenase family. In terms of assembly, homotetramer.

The protein resides in the cytoplasm. It catalyses the reaction D-glyceraldehyde 3-phosphate + phosphate + NAD(+) = (2R)-3-phospho-glyceroyl phosphate + NADH + H(+). The protein operates within carbohydrate degradation; glycolysis; pyruvate from D-glyceraldehyde 3-phosphate: step 1/5. The protein is Glyceraldehyde-3-phosphate dehydrogenase (GPD) of Phanerodontia chrysosporium (White-rot fungus).